Reading from the N-terminus, the 154-residue chain is Large ribosomal subunit protein uL22c (154 aa).

This sequence belongs to the universal ribosomal protein uL22 family. Part of the 50S ribosomal subunit.

Its subcellular location is the plastid. It localises to the chloroplast. In terms of biological role, this protein binds specifically to 23S rRNA. The globular domain of the protein is located near the polypeptide exit tunnel on the outside of the subunit, while an extended beta-hairpin is found that lines the wall of the exit tunnel in the center of the 70S ribosome. The chain is Large ribosomal subunit protein uL22c (rpl22) from Helianthus annuus (Common sunflower).